Reading from the N-terminus, the 204-residue chain is Putative peroxiredoxin ycf42 (204 aa).

Residues 5–163 form the Thioredoxin domain; it reads PKIGKTPPNF…LLRILESIQY (159 aa).

The protein belongs to the peroxiredoxin family. AhpC/Prx1 subfamily.

It is found in the plastid. The protein resides in the chloroplast. The enzyme catalyses a hydroperoxide + [protein]-dithiol = [protein]-disulfide + an alcohol + H2O. The chain is Putative peroxiredoxin ycf42 (ycf42) from Trieres chinensis (Marine centric diatom).